A 1651-amino-acid polypeptide reads, in one-letter code: Putative serine/threonine-protein kinase/receptor R818 (1651 aa).

A signal peptide spans 1–19 (MKSIGIFVVALWLTHFCDG). Asn-111, Asn-135, Asn-190, Asn-236, Asn-275, Asn-276, Asn-287, Asn-452, Asn-455, Asn-477, Asn-495, Asn-540, Asn-596, and Asn-722 each carry an N-linked (GlcNAc...) asparagine; by host glycan. Residues 749–769 (IILAIVIPVSFVICCIIIVLV) form a helical membrane-spanning segment. Positions 793 to 1057 (LDFMESLGSG…EIMTKLSTLI (265 aa)) constitute a Protein kinase 1 domain. Residues 799 to 807 (LGSGGSGEV) and Lys-820 each bind ATP. The Proton acceptor role is filled by Asp-915. Residues 1089–1115 (IHNNDETKNSFGSTTYGSNTISSSSNT) are disordered. Positions 1100–1115 (GSTTYGSNTISSSSNT) are enriched in low complexity. The 144-residue stretch at 1135–1278 (IIVFTDIISA…VTVNIAAKIT (144 aa)) folds into the Guanylate cyclase domain. The 252-residue stretch at 1394–1645 (IQIGKQIGVG…DVIMGLNDML (252 aa)) folds into the Protein kinase 2 domain. ATP is bound by residues 1400–1408 (IGVGSYGIV) and Lys-1421. The Proton acceptor role is filled by Asp-1515.

It localises to the membrane. It catalyses the reaction L-seryl-[protein] + ATP = O-phospho-L-seryl-[protein] + ADP + H(+). The enzyme catalyses L-threonyl-[protein] + ATP = O-phospho-L-threonyl-[protein] + ADP + H(+). The sequence is that of Putative serine/threonine-protein kinase/receptor R818 from Acanthamoeba polyphaga mimivirus (APMV).